The primary structure comprises 648 residues: MDHQLTREESQRLMHLLKLPMEQYGNFPLMRKAFLRACKIVHPDKGGSDELSQELISLYRRLEESLPCLSTQDFIETDILQIPSYGTPEWDEWWKEFNKDFDLFCNEAFDRSDDEQEPQPDDSAPIILSPTYPARSQATPPKKKAKMDSPNDMPADLMEYLSCAILSNKTLPCFLIYTTLEKVELLYNKLSEEVLSPRFNQVDHKYGRKYVPIFIITGTKHRVSAVFNYCATYCSVSFIVVKGVIKEYPLYCHLCVEPYSVLQESIEELNSEFFDAPEDAAKNVNWVAISEYALKINCDDIYLLMGLYKEFQSPVPNCSKCENRMLTNHFKFHKEHHENAFYLQLVENQKTICQQAVDGVIATKTVDMAQMTRNEQLAARFDKLFERLEVILSAQSSYTISMFMAGIVWFENLFPGQSFKDLLLELLECMVSNIPKRRYWLFTGPVNTGKTTLAAAVLDLGGTIYISDCYLIELEVANSQIHGCVEVLAEKVKIRLPPGQGINNLDNLRDHLDGAVKVNLEKKHLNKKTQIFPPGIVTSNEYFIPFTLRVRFCKKLVFKFSKYQYLSLKKTECLGRYRILQNGCTLLLLLIYHCDLDDFAESIQGKVRAWKERVNSEISVSTYLEMRQCCLEGRYSVCTKYSNANTAQ.

Residue Met-1 is modified to N-acetylmethionine; by host. The J domain maps to 12–75 (RLMHLLKLPM…LPCLSTQDFI (64 aa)). Residues 103–107 (LFCNE) carry the LXCXE motif motif. Ser-112 is modified (phosphoserine; by host). The interval 112–149 (SDDEQEPQPDDSAPIILSPTYPARSQATPPKKKAKMDS) is disordered. Thr-139 carries the phosphothreonine; by host modification. The short motif at 140 to 147 (PPKKKAKM) is the Nuclear localization signal element. Positions 154–272 (PADLMEYLSC…QESIEELNSE (119 aa)) form a DNA-binding region, T-ag OBD. Residues 281–373 (AKNVNWVAIS…KTVDMAQMTR (93 aa)) form a T-ag D1-type zinc finger. Zn(2+) is bound by residues Cys-318, Cys-321, His-329, and His-333. In terms of domain architecture, SF3 helicase spans 418 to 573 (SFKDLLLELL…QYLSLKKTEC (156 aa)). 444-451 (GPVNTGKT) contributes to the ATP binding site.

Forms homohexamers in the presence of ATP. Interacts with host HDAC1. Interacts (via LXCXE domain) with host RB1; the interaction induces the aberrant dissociation of RB1-E2F1 complex thereby disrupting RB1's activity. Interacts (via LXCXE domain) with host pRB-related proteins RBL1 and RBL2. Interacts (via C-terminus) with host TOP1 and POLA1 allowing DNA replication. Interacts with host preinitiation complex components TBP, TFIIA and TFIID to regulate transcription initiation. Mg(2+) serves as cofactor. In terms of processing, phosphorylated on both serine and threonine residues. Small t antigen inhibits the dephosphorylation by the AC form of PP2A. O-Glycosylated near the C-terminal region. Post-translationally, acetylated by CBP in a TP53-dependent manner.

The protein resides in the host nucleus. The catalysed reaction is Couples ATP hydrolysis with the unwinding of duplex DNA by translocating in the 3'-5' direction.. It carries out the reaction ATP + H2O = ADP + phosphate + H(+). Its function is as follows. Isoform large T antigen is a key early protein essential for both driving viral replication and inducing cellular transformation. Plays a role in viral genome replication by driving entry of quiescent cells into the cell cycle and by autoregulating the synthesis of viral early mRNA. Displays highly oncogenic activities by corrupting the host cellular checkpoint mechanisms that guard cell division and the transcription, replication, and repair of DNA. Participates in the modulation of cellular gene expression preceeding viral DNA replication. This step involves binding to host key cell cycle regulators retinoblastoma protein RB1/pRb and TP53. Induces the disassembly of host E2F1 transcription factors from RB1, thus promoting transcriptional activation of E2F1-regulated S-phase genes. Inhibits host TP53 binding to DNA, abrogating the ability of TP53 to stimulate gene expression. Plays the role of a TFIID-associated factor (TAF) in transcription initiation for all three RNA polymerases, by stabilizing the TBP-TFIIA complex on promoters. Initiates viral DNA replication and unwinding via interactions with the viral origin of replication. Binds two adjacent sites in the SV40 origin. The replication fork movement is facilitated by Large T antigen helicase activity. Has processive 3'-5' DNA helicase activity which requires a short 3' single-stranded region and ATP. Activates the transcription of viral late mRNA, through host TBP and TFIIA stabilization. Interferes with histone deacetylation mediated by HDAC1, leading to activation of transcription. The chain is Large T antigen from Murine polyomavirus (strain Kilham) (MPyV).